The following is a 495-amino-acid chain: UDP-N-acetylmuramoyl-L-alanyl-D-glutamate--2,6-diaminopimelate ligase (495 aa).

UDP-N-acetyl-alpha-D-muramoyl-L-alanyl-D-glutamate-binding positions include Leu27, Ser29, and 44-46; that span reads HKA. An ATP-binding site is contributed by 116–122; sequence GTNGKTT. UDP-N-acetyl-alpha-D-muramoyl-L-alanyl-D-glutamate contacts are provided by residues Asn157, 158–159, Ser185, Gln191, and Arg193; that span reads TT. N6-carboxylysine is present on Lys225. Meso-2,6-diaminopimelate contacts are provided by residues Arg390, 414–417, Gly465, and Glu469; that span reads DNPR. A Meso-diaminopimelate recognition motif motif is present at residues 414–417; the sequence is DNPR.

It belongs to the MurCDEF family. MurE subfamily. Mg(2+) is required as a cofactor. Post-translationally, carboxylation is probably crucial for Mg(2+) binding and, consequently, for the gamma-phosphate positioning of ATP.

It is found in the cytoplasm. The enzyme catalyses UDP-N-acetyl-alpha-D-muramoyl-L-alanyl-D-glutamate + meso-2,6-diaminopimelate + ATP = UDP-N-acetyl-alpha-D-muramoyl-L-alanyl-gamma-D-glutamyl-meso-2,6-diaminopimelate + ADP + phosphate + H(+). The protein operates within cell wall biogenesis; peptidoglycan biosynthesis. Catalyzes the addition of meso-diaminopimelic acid to the nucleotide precursor UDP-N-acetylmuramoyl-L-alanyl-D-glutamate (UMAG) in the biosynthesis of bacterial cell-wall peptidoglycan. The chain is UDP-N-acetylmuramoyl-L-alanyl-D-glutamate--2,6-diaminopimelate ligase from Pectobacterium atrosepticum (strain SCRI 1043 / ATCC BAA-672) (Erwinia carotovora subsp. atroseptica).